An 893-amino-acid chain; its full sequence is Translation initiation factor IF-2 (893 aa).

Residues 49–303 (LNREAGSGPD…KGSSLQQGFQ (255 aa)) form a disordered region. Polar residues predominate over residues 68-82 (STLNIPGTGGKSKSV). Basic and acidic residues-rich tracts occupy residues 93-159 (VKRD…KDKV) and 166-216 (DMTK…EENK). Basic residues predominate over residues 254–269 (GRGRNAKAARPAKKGN). Residues 270–283 (KHAESKADREEARA) are compositionally biased toward basic and acidic residues. The 170-residue stretch at 392–561 (PRAPVVTIMG…LLQAEVLELK (170 aa)) folds into the tr-type G domain. The G1 stretch occupies residues 401-408 (GHVDHGKT). 401–408 (GHVDHGKT) contacts GTP. The segment at 426–430 (GITQH) is G2. The G3 stretch occupies residues 447–450 (DTPG). GTP-binding positions include 447–451 (DTPGH) and 501–504 (NKID). Positions 501–504 (NKID) are G4. The tract at residues 537-539 (SAK) is G5.

The protein belongs to the TRAFAC class translation factor GTPase superfamily. Classic translation factor GTPase family. IF-2 subfamily.

Its subcellular location is the cytoplasm. In terms of biological role, one of the essential components for the initiation of protein synthesis. Protects formylmethionyl-tRNA from spontaneous hydrolysis and promotes its binding to the 30S ribosomal subunits. Also involved in the hydrolysis of GTP during the formation of the 70S ribosomal complex. The sequence is that of Translation initiation factor IF-2 from Salmonella arizonae (strain ATCC BAA-731 / CDC346-86 / RSK2980).